The following is a 395-amino-acid chain: Biotin biosynthesis cytochrome P450 (395 aa).

Substrate is bound at residue arginine 60. Heme is bound at residue 89–93; the sequence is HRRLR. 169 to 173 serves as a coordination point for substrate; the sequence is IDFTR. The cysteines at positions 250 and 275 are disulfide-linked. 285 to 287 provides a ligand contact to heme; sequence TAR. Position 307 (tyrosine 307) interacts with substrate. Heme is bound by residues 343 to 345 and cysteine 345; that span reads HVC.

Requires heme as cofactor.

The enzyme catalyses a C2-C8-saturated long-chain fatty acyl-[ACP] + 2 reduced [flavodoxin] + 3 O2 = 6-carboxyhexanoyl-[ACP] + a fatty aldehyde + 2 oxidized [flavodoxin] + 3 H2O + 3 H(+). It participates in cofactor biosynthesis; biotin biosynthesis. Functionally, catalyzes the C-C bond cleavage of fatty acid linked to acyl carrier protein (ACP) to generate pimelic acid for biotin biosynthesis. It has high affinity for long-chain fatty acids with the greatest affinity for myristic acid. The protein is Biotin biosynthesis cytochrome P450 (bioI) of Bacillus subtilis (strain 168).